The chain runs to 292 residues: UDP-N-acetylenolpyruvoylglucosamine reductase (292 aa).

The 166-residue stretch at 21 to 186 (QAGGLVDYLA…ISATFELQPD (166 aa)) folds into the FAD-binding PCMH-type domain. Arg-165 is an active-site residue. Ser-215 acts as the Proton donor in catalysis. Residue Glu-285 is part of the active site.

The protein belongs to the MurB family. FAD serves as cofactor.

Its subcellular location is the cytoplasm. It catalyses the reaction UDP-N-acetyl-alpha-D-muramate + NADP(+) = UDP-N-acetyl-3-O-(1-carboxyvinyl)-alpha-D-glucosamine + NADPH + H(+). It functions in the pathway cell wall biogenesis; peptidoglycan biosynthesis. In terms of biological role, cell wall formation. The sequence is that of UDP-N-acetylenolpyruvoylglucosamine reductase from Leuconostoc mesenteroides subsp. mesenteroides (strain ATCC 8293 / DSM 20343 / BCRC 11652 / CCM 1803 / JCM 6124 / NCDO 523 / NBRC 100496 / NCIMB 8023 / NCTC 12954 / NRRL B-1118 / 37Y).